We begin with the raw amino-acid sequence, 260 residues long: MAYKPQFYPGQTKIAQNRRDHMNPDVQLEKLRDIPDDDVVKIMGHRQPGEDYKTVHPPLEEMDLPEDYVRDLVEPLNGAKEGHRIRYIQFTDSMYFAPAQPYDRARTYMWRFRGVDTGTLSGRQVIEMRESDLEALSKNFLIDTAFFDPARIGIRGATVHGHSLRLDENGLMFDALQRYVYDEKTGHVLYVKDQVGRPLDEPVDVGEPLPEEKLKEITTIYRIDGVPMREDEELLTVVKRIHRARTLGGFLPVEDVFEKL.

Arginine 123 serves as a coordination point for coenzyme M.

Belongs to the methyl-coenzyme M reductase gamma subunit family. As to quaternary structure, MCR is a hexamer of two alpha, two beta, and two gamma chains, forming a dimer of heterotrimers. Coenzyme F430 is required as a cofactor.

The protein resides in the cytoplasm. The catalysed reaction is coenzyme B + methyl-coenzyme M = methane + coenzyme M-coenzyme B heterodisulfide. Its pathway is one-carbon metabolism; methyl-coenzyme M reduction; methane from methyl-coenzyme M: step 1/1. Component of the methyl-coenzyme M reductase (MCR) I that catalyzes the reductive cleavage of methyl-coenzyme M (CoM-S-CH3 or 2-(methylthio)ethanesulfonate) using coenzyme B (CoB or 7-mercaptoheptanoylthreonine phosphate) as reductant which results in the production of methane and the mixed heterodisulfide of CoB and CoM (CoM-S-S-CoB). This is the final step in methanogenesis. This Methanocaldococcus jannaschii (strain ATCC 43067 / DSM 2661 / JAL-1 / JCM 10045 / NBRC 100440) (Methanococcus jannaschii) protein is Methyl-coenzyme M reductase I subunit gamma (mcrG).